The chain runs to 457 residues: D-inositol 3-phosphate glycosyltransferase (457 aa).

Residue histidine 34 coordinates 1D-myo-inositol 3-phosphate. UDP-N-acetyl-alpha-D-glucosamine is bound by residues 40–41 (QP) and glycine 48. 1D-myo-inositol 3-phosphate contacts are provided by residues 45-50 (DAGGMN), lysine 103, tyrosine 136, threonine 160, and arginine 180. The UDP-N-acetyl-alpha-D-glucosamine site is built by arginine 267, lysine 272, and valine 333. Mg(2+)-binding residues include phenylalanine 342, arginine 343, and alanine 345. UDP-N-acetyl-alpha-D-glucosamine-binding residues include glutamate 355 and glutamate 363. Residue threonine 369 coordinates Mg(2+).

The protein belongs to the glycosyltransferase group 1 family. MshA subfamily. In terms of assembly, homodimer.

The catalysed reaction is 1D-myo-inositol 3-phosphate + UDP-N-acetyl-alpha-D-glucosamine = 1D-myo-inositol 2-acetamido-2-deoxy-alpha-D-glucopyranoside 3-phosphate + UDP + H(+). Functionally, catalyzes the transfer of a N-acetyl-glucosamine moiety to 1D-myo-inositol 3-phosphate to produce 1D-myo-inositol 2-acetamido-2-deoxy-glucopyranoside 3-phosphate in the mycothiol biosynthesis pathway. In Streptomyces coelicolor (strain ATCC BAA-471 / A3(2) / M145), this protein is D-inositol 3-phosphate glycosyltransferase.